The following is a 366-amino-acid chain: tRNA/tmRNA (uracil-C(5))-methyltransferase (366 aa).

The S-adenosyl-L-methionine site is built by Q190, Y218, N223, E239, and D299. C324 acts as the Nucleophile in catalysis. Catalysis depends on E358, which acts as the Proton acceptor.

It belongs to the class I-like SAM-binding methyltransferase superfamily. RNA M5U methyltransferase family. TrmA subfamily.

It catalyses the reaction uridine(54) in tRNA + S-adenosyl-L-methionine = 5-methyluridine(54) in tRNA + S-adenosyl-L-homocysteine + H(+). It carries out the reaction uridine(341) in tmRNA + S-adenosyl-L-methionine = 5-methyluridine(341) in tmRNA + S-adenosyl-L-homocysteine + H(+). Functionally, dual-specificity methyltransferase that catalyzes the formation of 5-methyluridine at position 54 (m5U54) in all tRNAs, and that of position 341 (m5U341) in tmRNA (transfer-mRNA). The chain is tRNA/tmRNA (uracil-C(5))-methyltransferase from Klebsiella pneumoniae (strain 342).